The sequence spans 1475 residues: Sex-determining transformer protein 2 (1475 aa).

The first 31 residues, 1–31 (MKLKYNKLLVSVVIVTFVTFGLLLAECFGKS), serve as a signal peptide directing secretion. The next 11 helical transmembrane spans lie at 446-466 (TIHFVVNVHSLIVILFTIFVW), 474-494 (AFMFFVRDALTCLLFCFVCST), 496-516 (GVIVLDTELIKYIIVLTLANL), 589-609 (WGCTSILIFPIVFVYWYFIDS), 737-757 (GVILCIPAILLIVISIGLLFI), 902-922 (AVGVLYEHYHRIAVVWNLFAF), 928-948 (AGIFIILLSIITFIFAITPTI), 952-972 (FLFSLLVVGTQIEVAALVHLF), 979-999 (IYTNLALFAGFLAAWDPFCAL), 1034-1054 (IAQFFVLLITAFSILAIICSI), and 1060-1080 (IFFVPTVILIVIQIVAVFNSI). Residues 1133–1273 (EFSIKRSSPP…RERNLMNKRS (141 aa)) form an interaction with fem-3 region. Disordered stretches follow at residues 1142 to 1194 (PCRY…GDNT) and 1267 to 1330 (NLMN…VDEP). A compositionally biased stretch (basic residues) spans 1178-1188 (RSPKTGNKRVR). A compositionally biased stretch (basic and acidic residues) spans 1276-1310 (QRRESRNIEKMKKSQENLDKEKSEEKISESKKNQD). An MX regulatory domain; required for tra-1 binding region spans residues 1392-1413 (CEDIYWTHRTGQLPPGLQVPRR). The interval 1424 to 1475 (TPPPEDLNWVPPAESPPIPIPQQAFDLLEERRRNHREQQDEAREGDLSDPEV) is disordered. Residues 1451 to 1469 (LEERRRNHREQQDEAREGD) show a composition bias toward basic and acidic residues.

In terms of assembly, interacts with tra-1 and fem-3. Undergoes cleavage by tra-3 to produce a feminizing carboxy-terminal isoform Tra-2B. As to expression, somatic and germline tissues. Isoform Tra-2B is specific to oocytes.

It is found in the membrane. Functionally, plays a major role in controlling sexual cell fates. Promotes female development in XX animals where it sequesters one or more of the FEM proteins to the membrane thereby freeing the tra-1 protein (a putative transcription factor) to enter the nucleus and promote female development. In XO animals it acts as a receptor for her-1 which prevents it from binding to FEM proteins thereby repressing the activity of tra-1. Negatively regulates male development when bound to fem-3 and is required together with tra-1 for promoting spermatogenesis. Also required for feminizing tra-3 activity. The protein is Sex-determining transformer protein 2 (tra-2) of Caenorhabditis elegans.